Consider the following 147-residue polypeptide: Nucleoside diphosphate kinase (147 aa).

ATP contacts are provided by Lys-9, Arg-85, Thr-91, Arg-102, and Asn-112. His-115 serves as the catalytic Pros-phosphohistidine intermediate.

Belongs to the NDK family. Mg(2+) is required as a cofactor.

It catalyses the reaction a 2'-deoxyribonucleoside 5'-diphosphate + ATP = a 2'-deoxyribonucleoside 5'-triphosphate + ADP. The enzyme catalyses a ribonucleoside 5'-diphosphate + ATP = a ribonucleoside 5'-triphosphate + ADP. In terms of biological role, major role in the synthesis of nucleoside triphosphates other than ATP. The ATP gamma phosphate is transferred to the NDP beta phosphate via a ping-pong mechanism, using a phosphorylated active-site intermediate. The protein is Nucleoside diphosphate kinase (NDK1) of Encephalitozoon cuniculi (strain GB-M1) (Microsporidian parasite).